A 202-amino-acid chain; its full sequence is Endothelin-1 (202 aa).

The signal sequence occupies residues 1-25 (MDYFPMIFALLFVAFQGAPEAAVLG). Positions 26–50 (TELSTGAESGGERPVPTTPWRPRRS) are excised as a propeptide. Residues 29 to 48 (STGAESGGERPVPTTPWRPR) form a disordered region. 2 cysteine pairs are disulfide-bonded: cysteine 53-cysteine 67 and cysteine 55-cysteine 63. Residues 74-202 (VNTPEHVVPY…DKKVIYSRAH (129 aa)) constitute a propeptide that is removed on maturation. The tract at residues 110-124 (CQCASQTDKKCQNFC) is endothelin-like.

This sequence belongs to the endothelin/sarafotoxin family.

The protein localises to the secreted. Its function is as follows. Endothelins are endothelium-derived vasoconstrictor peptides. Probable ligand for G-protein coupled receptors EDNRA and EDNRB which activates PTK2B, BCAR1, BCAR3 and, GTPases RAP1 and RHOA cascade in glomerular mesangial cells. Also binds the DEAR/FBXW7-AS1 receptor. Promotes mesenteric arterial wall remodeling via activation of ROCK signaling and subsequent colocalization of NFATC3 with F-actin filaments. NFATC3 then translocates to the nucleus where it subsequently promotes the transcription of the smooth muscle hypertrophy and differentiation marker ACTA2. This chain is Endothelin-1 (EDN1), found in Ovis aries (Sheep).